The sequence spans 270 residues: Regulatory protein RecX (270 aa).

It belongs to the RecX family.

The protein resides in the cytoplasm. Modulates RecA activity. The polypeptide is Regulatory protein RecX (Bacillus mycoides (strain KBAB4) (Bacillus weihenstephanensis)).